An 83-amino-acid chain; its full sequence is Evasin P1124 (83 aa).

Positions 1-28 (MAVNVFTILQLAVFAAIVLNVNLHSVSA) are cleaved as a signal peptide. Cystine bridges form between C48-C66, C52-C68, and C62-C79. N-linked (GlcNAc...) asparagine glycosylation is present at N51.

The protein localises to the secreted. Functionally, salivary chemokine-binding protein which binds to host chemokines CXCL1, CXCL2, CXCL3, CXCL5, CXCL6, CXCL12 and CXCL13. The sequence is that of Evasin P1124 from Ixodes ricinus (Common tick).